The chain runs to 438 residues: Keratin, type I cytoskeletal 13 (438 aa).

A head region spans residues 1–95 (MSCRFQSSSM…SVDGGLLSGN (95 aa)). Omega-N-methylarginine is present on residues Arg-27 and Arg-35. Residues 96–131 (EKITMQNLNDRLASYLEKVRALEAANADLEVKIRDW) form a coil region. The IF rod domain occupies 96–408 (EKITMQNLND…SLLEGQDAKM (313 aa)). A linker 1 region spans residues 132–150 (HLKQSPTSPERDYSAYYKT). The segment at 151 to 242 (IEELRIKILE…KNHEEEMKEF (92 aa)) is coil 1B. A linker 12 region spans residues 243-265 (SNQAVGQVNVEMDATPGIDLTRV). Residues 266–404 (LAEMREQYEA…ATYRSLLEGQ (139 aa)) form a coil 2 region. The interval 405-438 (DAKMTGFNTGGNSTTTSNTSTSPSTSGRPDFRKY) is tail. Positions 408 to 438 (MTGFNTGGNSTTTSNTSTSPSTSGRPDFRKY) are disordered. Low complexity predominate over residues 409 to 431 (TGFNTGGNSTTTSNTSTSPSTSG).

It belongs to the intermediate filament family. Heterotetramer of two type I and two type II keratins. In terms of processing, O-glycosylated; glycans consist of single N-acetylglucosamine residues.

In terms of biological role, type 1 keratin. Maintains postnatal tongue mucosal cell homeostasis and tissue organization in response to mechanical stress, potentially via regulation of the G1/S phase cyclins CCNE1 and CCNE2. The chain is Keratin, type I cytoskeletal 13 from Rattus norvegicus (Rat).